The sequence spans 339 residues: Probable cytosolic iron-sulfur protein assembly protein CIAO1 (339 aa).

WD repeat units lie at residues 14 to 53 (HPDSRCWFLAWNPSGTLLASCGGDRKIRIWGTEGDSWICK), 59 to 98 (GHQRTVRKVAWSPCGNYLASASFDATTCIWKKNQDDFECV), 103 to 142 (GHENEVKSVAWAPSGNLLATCSRDKSVWVWEVDEEDEYEC), 148 to 187 (SHTQDVKHVVWHPSQELLASASYDDTVKLYQEEGDDWVCC), 192 to 231 (GHESTVWSIAFDPSGQRLASCSDDRTVRIWRQYLPGNEQG), 250 to 289 (FHTRTIYDVAWCQLTGALATACGDDAIRVFEEDPGSDPQQ), and 301 to 339 (AHSQDVNCVAWNPKEPGLLASCSDDGEVAFWEYHQPAGL). An LYR motif; required for interaction with HSC20 motif is present at residues 176 to 178 (LYQ).

Belongs to the WD repeat CIA1 family. As to quaternary structure, component of the CIA complex. Interacts with CIAO2A and forms a complex with CIAO2B and MMS19; the interactions with CIAO2A and CIAO2B are mutually exclusive. Interacts with CHD1L, ERCC2, IREB2 and POLD1. Component of the MMXD complex, which includes CIAO1, ERCC2, CIAO2B, MMS19 and SLC25A5. Interacts with WT1. Interacts with CIAO3. Interacts (via LYR motif) with HSC20.

Its subcellular location is the cytoplasm. In terms of biological role, key component of the cytosolic iron-sulfur protein assembly (CIA) complex, a multiprotein complex that mediates the incorporation of iron-sulfur cluster into extramitochondrial Fe/S proteins. As a CIA complex component, interacts specifically with CIAO2A or CIAO2B and MMS19 to assist different branches of iron-sulfur protein assembly, depending of its interactors. The complex CIAO1:CIAO2B:MMS19 binds to and facilitates the assembly of most cytosolic-nuclear Fe/S proteins. CIAO1:CIAO2A specifically matures ACO1 and stabilizes IREB2. Seems to specifically modulate the transactivation activity of WT1. As part of the mitotic spindle-associated MMXD complex it may play a role in chromosome segregation. This Mus musculus (Mouse) protein is Probable cytosolic iron-sulfur protein assembly protein CIAO1.